We begin with the raw amino-acid sequence, 145 residues long: Small ribosomal subunit protein bS16 (145 aa).

Residues 82–145 (IKERAATNNP…EAAAEEQTEA (64 aa)) form a disordered region. Residues 95 to 115 (EPGKKAKERAEERAEKAREAA) show a composition bias toward basic and acidic residues. Positions 116-137 (EAAAAAAAAPAEEAAAEAPAEA) are enriched in low complexity.

The protein belongs to the bacterial ribosomal protein bS16 family.

This chain is Small ribosomal subunit protein bS16, found in Novosphingobium aromaticivorans (strain ATCC 700278 / DSM 12444 / CCUG 56034 / CIP 105152 / NBRC 16084 / F199).